The primary structure comprises 360 residues: uncharacterized protein (360 aa).

The 104-residue stretch at 45 to 148 (EDIEDKILQI…KNKTYVSITP (104 aa)) folds into the THUMP domain.

This is an uncharacterized protein from Methanocaldococcus jannaschii (strain ATCC 43067 / DSM 2661 / JAL-1 / JCM 10045 / NBRC 100440) (Methanococcus jannaschii).